Here is a 122-residue protein sequence, read N- to C-terminus: Large ribosomal subunit protein bL19 (122 aa).

Belongs to the bacterial ribosomal protein bL19 family.

Functionally, this protein is located at the 30S-50S ribosomal subunit interface and may play a role in the structure and function of the aminoacyl-tRNA binding site. The protein is Large ribosomal subunit protein bL19 of Novosphingobium aromaticivorans (strain ATCC 700278 / DSM 12444 / CCUG 56034 / CIP 105152 / NBRC 16084 / F199).